The following is a 348-amino-acid chain: Thioredoxin-related protein DsbJ (348 aa).

Residues 1 to 32 form the signal peptide; it reads MILLQNIKRCSLKQLKVLATLLLSLSLPTLEA.

The protein resides in the periplasm. This chain is Thioredoxin-related protein DsbJ (dsbJ), found in Chlamydia pneumoniae (Chlamydophila pneumoniae).